We begin with the raw amino-acid sequence, 89 residues long: MALLDFFLSRKKTTANIAKERLQIIVAERRRGDSEPHYLPQLKRDLLAVICKYVQIDPEMVSVQLEQKGDDISVLELNVTLPENEEAPK.

The protein belongs to the MinE family.

Functionally, prevents the cell division inhibition by proteins MinC and MinD at internal division sites while permitting inhibition at polar sites. This ensures cell division at the proper site by restricting the formation of a division septum at the midpoint of the long axis of the cell. This is Cell division topological specificity factor from Edwardsiella ictaluri (strain 93-146).